Consider the following 256-residue polypeptide: Small ribosomal subunit protein uS2 (256 aa).

This sequence belongs to the universal ribosomal protein uS2 family.

In Streptococcus agalactiae serotype Ia (strain ATCC 27591 / A909 / CDC SS700), this protein is Small ribosomal subunit protein uS2.